Consider the following 445-residue polypeptide: Rab GDP dissociation inhibitor beta (445 aa).

Methionine 1 is modified (N-acetylmethionine). An N6-succinyllysine modification is found at lysine 57. Residue lysine 112 is modified to N6-acetyllysine. The residue at position 130 (serine 130) is a Phosphoserine. An N6-acetyllysine modification is found at lysine 269. Serine 382 is modified (phosphoserine).

It belongs to the Rab GDI family. As to quaternary structure, interacts with RHOH. Interacts with the GDP-bound inactive forms of RAB3A, RAB3B, RAB3C, RAB5A, RAB5B, RAB5C, RAB8A, RAB8B, RAB10, RAB12, RAB35, and RAB43; binds RAB3D to a lesser extent. Interacts with DZIP1; this interaction negatively regulates the interaction of GDI2 with GDP-bound RAB8A.

It is found in the cytoplasm. The protein localises to the membrane. It localises to the golgi apparatus. The protein resides in the trans-Golgi network. Its function is as follows. GDP-dissociation inhibitor preventing the GDP to GTP exchange of most Rab proteins. By keeping these small GTPases in their inactive GDP-bound form regulates intracellular membrane trafficking. Negatively regulates protein transport to the cilium and ciliogenesis through the inhibition of RAB8A. This is Rab GDP dissociation inhibitor beta (GDI2) from Canis lupus familiaris (Dog).